The following is a 147-amino-acid chain: Diaminohydroxyphosphoribosylamino-pyrimidine deaminase (147 aa).

Residues 1 to 123 (MNDIFYMKRA…YLKKHGICVK (123 aa)) enclose the CMP/dCMP-type deaminase domain. A Zn(2+)-binding site is contributed by His-50. The Proton donor role is filled by Glu-52. Residues Cys-75 and Cys-84 each contribute to the Zn(2+) site.

The protein belongs to the cytidine and deoxycytidylate deaminase family. The cofactor is Zn(2+).

It catalyses the reaction 2,5-diamino-6-hydroxy-4-(5-phosphoribosylamino)-pyrimidine + H2O + H(+) = 5-amino-6-(5-phospho-D-ribosylamino)uracil + NH4(+). The protein operates within cofactor biosynthesis; riboflavin biosynthesis; 5-amino-6-(D-ribitylamino)uracil from GTP: step 2/4. The chain is Diaminohydroxyphosphoribosylamino-pyrimidine deaminase (ribD1) from Buchnera aphidicola subsp. Acyrthosiphon pisum (strain APS) (Acyrthosiphon pisum symbiotic bacterium).